The following is a 101-amino-acid chain: Integration host factor subunit beta (101 aa).

The disordered stretch occupies residues 57–77 (PARAGRNPRTGAHVPVDQKSV).

The protein belongs to the bacterial histone-like protein family. In terms of assembly, heterodimer of an alpha and a beta chain.

In terms of biological role, this protein is one of the two subunits of integration host factor, a specific DNA-binding protein that functions in genetic recombination as well as in transcriptional and translational control. The polypeptide is Integration host factor subunit beta (Rhodopseudomonas palustris (strain HaA2)).